A 366-amino-acid chain; its full sequence is Putative neutrophil cytosol factor 1C (366 aa).

One can recognise a PX domain in the interval 1–101 (MYMFLVKWQD…DFFKVRPDDL (101 aa)). 2 consecutive SH3 domains span residues 132–191 (IILQ…PLDS) and 202–261 (YAGE…KSGQ). The segment at 261-366 (QDVSQAQRQI…STKRKLASAV (106 aa)) is disordered. 2 positions are modified to phosphoserine: serine 279 and serine 280. The segment covering 285 to 294 (HSIHQRSRKR) has biased composition (basic residues). Phosphoserine occurs at positions 296, 304, 321, and 324.

The protein localises to the cytoplasm. In terms of biological role, may be required for activation of the latent NADPH oxidase (necessary for superoxide production). This Homo sapiens (Human) protein is Putative neutrophil cytosol factor 1C (NCF1C).